Here is a 417-residue protein sequence, read N- to C-terminus: NADH-quinone oxidoreductase subunit D (417 aa).

The protein belongs to the complex I 49 kDa subunit family. As to quaternary structure, NDH-1 is composed of 14 different subunits. Subunits NuoB, C, D, E, F, and G constitute the peripheral sector of the complex.

It is found in the cell inner membrane. The enzyme catalyses a quinone + NADH + 5 H(+)(in) = a quinol + NAD(+) + 4 H(+)(out). In terms of biological role, NDH-1 shuttles electrons from NADH, via FMN and iron-sulfur (Fe-S) centers, to quinones in the respiratory chain. The immediate electron acceptor for the enzyme in this species is believed to be ubiquinone. Couples the redox reaction to proton translocation (for every two electrons transferred, four hydrogen ions are translocated across the cytoplasmic membrane), and thus conserves the redox energy in a proton gradient. The sequence is that of NADH-quinone oxidoreductase subunit D from Janthinobacterium sp. (strain Marseille) (Minibacterium massiliensis).